The sequence spans 64 residues: Cold shock protein CapA (64 aa).

The CSD domain maps to 7-64; it reads GTVKWFNDEKGFGFITPQGGGDDLFVHFKAIESDGFKSLKEGQTVSFVAEKGQKGMQA.

It is found in the cytoplasm. Functionally, affects cell viability at low temperatures. This is Cold shock protein CapA (capA) from Pseudomonas fragi.